The following is a 207-amino-acid chain: dTDP-4-dehydrorhamnose 3-epimerase (207 aa).

Residues arginine 23, aspartate 28, 47-49 (QAN), and arginine 59 contribute to the substrate site. The Proton acceptor role is filled by histidine 62. Residues lysine 72 and histidine 119 each coordinate substrate. Residue tyrosine 132 is the Proton donor of the active site. Residues glutamate 143 and arginine 167 each contribute to the substrate site.

This sequence belongs to the dTDP-4-dehydrorhamnose 3,5-epimerase family.

Its pathway is antibiotic biosynthesis; novobiocin biosynthesis. Functionally, dTDP-6-deoxy-D-xylo-4-hexulose 3-epimerase that acts together with NovU to catalyze the formation of dTDP-4-keto-6-deoxy-5-C-methyl-L-lyxo-hexose from dTDP-4-keto-6-deoxy-D-glucose in the novobiocin biosynthesis pathway, an aminocoumarin family antibiotic that targets bacterial DNA gyrases. The protein is dTDP-4-dehydrorhamnose 3-epimerase of Streptomyces niveus (Streptomyces spheroides).